The primary structure comprises 496 residues: Autophagy-related protein 21 (496 aa).

A WD 1 repeat occupies 1–35; it reads MKVLQFNQDATCCVVAASSHQISIFNCDPFGKCFE. A disordered region spans residues 41 to 86; that stretch reads SKKKTSNNNGTASNSESRNNEESILITNGSRDRTDAEEEEDNEDNA. The span at 46–57 shows a compositional bias: low complexity; sequence SNNNGTASNSES. A compositionally biased stretch (acidic residues) spans 75–84; it reads DAEEEEDNED. The stretch at 148–190 is one WD 2 repeat; sequence VMNRKRMCVLLESDQIFIYDISCMKPLETIDLWEDHYKRSQAN. T213 carries the post-translational modification Phosphothreonine. Phosphoserine is present on S237. 3 WD repeats span residues 294–334, 346–385, and 448–488; these read VHKG…DYMS, TRLCNLYQLAFDKSMTMIGCVGDTDTIHLFKLDDASNSLP, and VNES…GECV. The short motif at 342–346 is the L/FRRG motif element; it reads FRRGT.

Belongs to the WD repeat PROPPIN family.

Its subcellular location is the cytoplasm. It is found in the vacuole membrane. In terms of biological role, required for cytoplasm to vacuole transport (Cvt) vesicles formation and mitophagy. Involved in binding of phosphatidylethanolamine to ATG8 and in recruitment of ATG8 and ATG5 to the pre-autophagosomal structure. Protects ATG8 from ARG4-mediated cleavage. Essential for maturation of proaminopeptidase I. The chain is Autophagy-related protein 21 (ATG21) from Saccharomyces cerevisiae (strain YJM789) (Baker's yeast).